A 157-amino-acid chain; its full sequence is MPRSWQEMNALTLAYLGDVVYELWVRTHLLNNGYEKVNELHRLATQYVRAGTQAKLLHHILPHLDEQELSVVHRGRNAKGGHPKSTDVVTYRYATGFEALVGYWQLTGRTERMLWAFEQVDQFVGEEDEGKGKGETAKEEESITDALSPAEQSEIDC.

The active site involves Asp18. The interval 126 to 157 (EEDEGKGKGETAKEEESITDALSPAEQSEIDC) is disordered. Basic and acidic residues predominate over residues 130–141 (GKGKGETAKEEE).

It belongs to the MrnC RNase family. As to quaternary structure, homodimer. Mg(2+) serves as cofactor.

Its subcellular location is the cytoplasm. Its function is as follows. Involved in correct processing of both the 5' and 3' ends of 23S rRNA precursor. Processes 30S rRNA precursor transcript even in absence of ribonuclease 3 (Rnc); Rnc processes 30S rRNA into smaller rRNA precursors. This is Mini-ribonuclease 3 from Desulfitobacterium hafniense (strain Y51).